Here is a 429-residue protein sequence, read N- to C-terminus: UPF0242 protein CT_616 (429 aa).

The protein belongs to the UPF0242 family.

This is UPF0242 protein CT_616 from Chlamydia trachomatis serovar D (strain ATCC VR-885 / DSM 19411 / UW-3/Cx).